A 225-amino-acid polypeptide reads, in one-letter code: 2-phytyl-1,4-naphtoquinone methyltransferase (225 aa).

It belongs to the class I-like SAM-binding methyltransferase superfamily. MenG/UbiE family.

The enzyme catalyses demethylphylloquinol + S-adenosyl-L-methionine = phylloquinol + S-adenosyl-L-homocysteine + H(+). It functions in the pathway cofactor biosynthesis; phylloquinone biosynthesis. Functionally, methyltransferase required for the conversion of 2-phytyl-1,4-beta-naphthoquinol to phylloquinol. This Thermosynechococcus vestitus (strain NIES-2133 / IAM M-273 / BP-1) protein is 2-phytyl-1,4-naphtoquinone methyltransferase.